Consider the following 935-residue polypeptide: Pre-mRNA-splicing factor CWC22 homolog (935 aa).

The tract at residues 1 to 179 (MSRSPSPDSP…PKDLLRTRTG (179 aa)) is disordered. 2 stretches are compositionally biased toward basic and acidic residues: residues 13-25 (VRDD…REQS) and 49-70 (ESSR…DEKM). Residues 84–148 (QHRRHRESRS…RSPARRRSPV (65 aa)) show a composition bias toward basic residues. Positions 159-175 (PTEEPEKKKNDPKDLLR) are enriched in basic and acidic residues. An MIF4G domain is found at 212 to 400 (KKKIHGLVNR…ETAMQIRKDK (189 aa)). Positions 463–489 (ADISSDEEEEVEDDDEESEAEEAPRKT) are disordered. Residues 465-483 (ISSDEEEEVEDDDEESEAE) show a composition bias toward acidic residues. Positions 502 to 633 (AFRREVYLTL…EWKILADVKM (132 aa)) constitute an MI domain. Positions 725–935 (KAAQSSSDSS…VGSDDRRRRH (211 aa)) are disordered. Positions 729-763 (SSSDSSSDSSDSSDSSDSSGSSDSSDDSSSSSSSD) are enriched in low complexity. Basic and acidic residues-rich tracts occupy residues 780–891 (KKKE…DRKE) and 897–935 (DRRD…RRRH).

It belongs to the CWC22 family.

The protein localises to the nucleus. It is found in the nucleus speckle. Required for early embryogenesis and tissue differentiation. Required for pre-mRNA splicing and for exon-junction complex (EJC) assembly. Hinders EIF4A3 from non-specifically binding RNA and escorts it to the splicing machinery to promote EJC assembly on mature mRNAs. Through its role in EJC assembly, required for nonsense-mediated mRNA decay. In Caenorhabditis briggsae, this protein is Pre-mRNA-splicing factor CWC22 homolog.